We begin with the raw amino-acid sequence, 122 residues long: Large ribosomal subunit protein uL14 (122 aa).

This sequence belongs to the universal ribosomal protein uL14 family. Part of the 50S ribosomal subunit. Forms a cluster with proteins L3 and L19. In the 70S ribosome, L14 and L19 interact and together make contacts with the 16S rRNA in bridges B5 and B8.

Binds to 23S rRNA. Forms part of two intersubunit bridges in the 70S ribosome. The chain is Large ribosomal subunit protein uL14 from Solidesulfovibrio magneticus (strain ATCC 700980 / DSM 13731 / RS-1) (Desulfovibrio magneticus).